The primary structure comprises 147 residues: Large ribosomal subunit protein uL22c (147 aa).

Belongs to the universal ribosomal protein uL22 family. Part of the 50S ribosomal subunit.

The protein resides in the plastid. In terms of biological role, this protein binds specifically to 23S rRNA. Functionally, the globular domain of the protein is located near the polypeptide exit tunnel on the outside of the subunit, while an extended beta-hairpin is found that lines the wall of the exit tunnel in the center of the 70S ribosome. This chain is Large ribosomal subunit protein uL22c (rpl22), found in Cuscuta gronovii (Common dodder).